The chain runs to 370 residues: Anhydro-N-acetylmuramic acid kinase (370 aa).

ATP is bound at residue 13–20 (GTSMDGVD).

It belongs to the anhydro-N-acetylmuramic acid kinase family.

The catalysed reaction is 1,6-anhydro-N-acetyl-beta-muramate + ATP + H2O = N-acetyl-D-muramate 6-phosphate + ADP + H(+). Its pathway is amino-sugar metabolism; 1,6-anhydro-N-acetylmuramate degradation. The protein operates within cell wall biogenesis; peptidoglycan recycling. Functionally, catalyzes the specific phosphorylation of 1,6-anhydro-N-acetylmuramic acid (anhMurNAc) with the simultaneous cleavage of the 1,6-anhydro ring, generating MurNAc-6-P. Is required for the utilization of anhMurNAc either imported from the medium or derived from its own cell wall murein, and thus plays a role in cell wall recycling. This chain is Anhydro-N-acetylmuramic acid kinase, found in Vibrio vulnificus (strain CMCP6).